Consider the following 129-residue polypeptide: Small ribosomal subunit protein uS11 (129 aa).

The protein belongs to the universal ribosomal protein uS11 family. Part of the 30S ribosomal subunit.

In terms of biological role, located on the platform of the 30S subunit. The sequence is that of Small ribosomal subunit protein uS11 from Methanocaldococcus jannaschii (strain ATCC 43067 / DSM 2661 / JAL-1 / JCM 10045 / NBRC 100440) (Methanococcus jannaschii).